The primary structure comprises 131 residues: Small ribosomal subunit protein uS8 (131 aa).

Belongs to the universal ribosomal protein uS8 family. In terms of assembly, part of the 30S ribosomal subunit. Contacts proteins S5 and S12.

In terms of biological role, one of the primary rRNA binding proteins, it binds directly to 16S rRNA central domain where it helps coordinate assembly of the platform of the 30S subunit. The protein is Small ribosomal subunit protein uS8 of Laribacter hongkongensis (strain HLHK9).